We begin with the raw amino-acid sequence, 445 residues long: Putative diacyglycerol O-acyltransferase Rv2285 (445 aa).

His135 functions as the Proton acceptor in the catalytic mechanism.

The protein belongs to the long-chain O-acyltransferase family.

The enzyme catalyses an acyl-CoA + a 1,2-diacyl-sn-glycerol = a triacyl-sn-glycerol + CoA. The catalysed reaction is di-(9Z)-octadecenoylglycerol + (9Z)-octadecenoyl-CoA = 1,2,3-tri-(9Z-octadecenoyl)-glycerol + CoA. It functions in the pathway glycerolipid metabolism; triacylglycerol biosynthesis. Catalyzes the terminal and only committed step in triacylglycerol synthesis by using diacylglycerol and fatty acyl CoA as substrates. Required for storage lipid synthesis. Its function is as follows. Upon expression in E.coli functions weakly as a triacylglycerol synthase, making triacylglycerol (TG) from diolein and long-chain fatty acyl-CoA. Has very weak wax synthase activity, incorporating palmityl alcohol into wax esters in the presence of palmitoyl-CoA. The protein is Putative diacyglycerol O-acyltransferase Rv2285 of Mycobacterium tuberculosis (strain ATCC 25618 / H37Rv).